The sequence spans 369 residues: MPSDFPPGQAGIHARFRVDYPEFSLDVDLRLPGRGVTALFGQSGSGKTTCLRCMAGLAPVSDGYLDINGEVWLDSAARRAVPTHKRALGYVFQEASLFEHLDVLANLRYGMKRVPPALRRVDLEQATGLLGIGHLLARMPAGLSGGERQRVGIARALLTSPRLLLMDEPLAALDVQRKREILPYLERLHDELDIPVIYVSHSPDEVARLADHLVLLEQGRAVASGPLDALLTRLDLPMAMTDDASVVVTGEAAGFDPGYALLTLQLPGGRARLRFVHQAAPAGQRLRVVVHARDVSLALQQPREGSILNVLAVRVLEMAPAANPAHVMVRLDADGTPLLARITRYSRDRLALAPEMQAWAQIKAVSLLA.

Residues 7-243 (PGQAGIHARF…LDLPMAMTDD (237 aa)) enclose the ABC transporter domain. Residue 41–48 (GQSGSGKT) coordinates ATP. In terms of domain architecture, Mop spans 304-369 (EGSILNVLAV…AQIKAVSLLA (66 aa)).

This sequence belongs to the ABC transporter superfamily. Molybdate importer (TC 3.A.1.8) family. As to quaternary structure, the complex is composed of two ATP-binding proteins (ModC), two transmembrane proteins (ModB) and a solute-binding protein (ModA).

The protein resides in the cell inner membrane. It catalyses the reaction molybdate(out) + ATP + H2O = molybdate(in) + ADP + phosphate + H(+). Part of the ABC transporter complex ModABC involved in molybdenum import. Responsible for energy coupling to the transport system. The polypeptide is Molybdenum import ATP-binding protein ModC (Bordetella pertussis (strain Tohama I / ATCC BAA-589 / NCTC 13251)).